Reading from the N-terminus, the 506-residue chain is Protein spinster homolog 1 (506 aa).

The interval 1-42 (MSQADADITPFFADDNEGEGPVENGVGSPLPEDEEEESPSGV) is disordered. Residues 21–30 (PVENGVGSPL) are compositionally biased toward low complexity. Transmembrane regions (helical) follow at residues 52 to 71 (IVLC…VAGV), 87 to 107 (GLLQ…FGYL), 115 to 135 (LIMC…SFIG), 149 to 169 (VGVG…DLFV), 176 to 196 (MLSI…IVGS), 207 to 227 (WALR…MLVV), 266 to 286 (FGFT…PAFL), 310 to 330 (LIFG…GVQA), 344 to 364 (LVCA…IMFA), 373 to 393 (VFIF…ADIL), 408 to 428 (FQIV…IGVV), and 450 to 470 (LLCS…AVFI).

The protein belongs to the major facilitator superfamily. Spinster (TC 2.A.1.49) family. As to expression, expressed in yolk cells.

It is found in the lysosome membrane. It catalyses the reaction a 1-acyl-sn-glycero-3-phosphocholine(out) + H(+)(out) = a 1-acyl-sn-glycero-3-phosphocholine(in) + H(+)(in). The enzyme catalyses a 1-acyl-sn-glycero-3-phosphoethanolamine(out) + H(+)(out) = a 1-acyl-sn-glycero-3-phosphoethanolamine(in) + H(+)(in). The catalysed reaction is a 1-O-(1Z-alkenyl)-sn-glycero-3-phosphocholine(out) + H(+)(out) = a 1-O-(1Z-alkenyl)-sn-glycero-3-phosphocholine(in) + H(+)(in). It carries out the reaction a 1-O-(1Z-alkenyl)-sn-glycero-3-phosphoethanolamine(out) + H(+)(out) = a 1-O-(1Z-alkenyl)-sn-glycero-3-phosphoethanolamine(in) + H(+)(in). Functionally, mediates the rate-limiting, proton-dependent, lysosomal efflux of lysophospholipids. Selective for zwitterionic headgroups such as lysophosphatidylcholine (LPC) and lysophosphatidylethanolamine (LPE). Essential player in lysosomal homeostasis. Critical for embryogenesis. Involved in the regulation of developmental senescence. This is Protein spinster homolog 1 (spns1) from Danio rerio (Zebrafish).